The sequence spans 219 residues: Probable GTP-binding protein EngB (219 aa).

The EngB-type G domain maps to 31-205; it reads VGVEIAFAGR…LSILNEWCHP (175 aa). Residues 39 to 46, 66 to 70, 84 to 87, 151 to 154, and 184 to 186 each bind GTP; these read GRSNAGKS, GRTQL, DLPG, TKSD, and FSA. Mg(2+) is bound by residues serine 46 and threonine 68.

This sequence belongs to the TRAFAC class TrmE-Era-EngA-EngB-Septin-like GTPase superfamily. EngB GTPase family. It depends on Mg(2+) as a cofactor.

In terms of biological role, necessary for normal cell division and for the maintenance of normal septation. The chain is Probable GTP-binding protein EngB from Shewanella sp. (strain W3-18-1).